We begin with the raw amino-acid sequence, 449 residues long: Polyadenylation factor subunit 2 (449 aa).

WD repeat units lie at residues 77 to 116 (KVKHVIPAITWTPEGRRLVVATYSGEFSLWNGSSFNFESI), 119 to 158 (AHDSAVTVMQYSHAGDWLISGDADGTIKIWQPNFNMVKVL), 161 to 200 (AHTECMRDISFSYSDQKFVTCSDDNVLKIWNFSNGQQERV), 203 to 242 (GHHWDVKSCDWHPKMGLIVSGSKDNLIKLWDPRTGRNVST), 245 to 285 (GLKH…RELQ), 288 to 328 (RDDM…SNST), and 337 to 376 (AHEKSVTSLAYSPVGHILASAAKDRTIRFWARSRPVDPNA). A disordered region spans residues 411-432 (LPPANETNLGTPQPSILGSESI). Polar residues predominate over residues 415-432 (NETNLGTPQPSILGSESI).

It is found in the nucleus. In terms of biological role, required for 3'-end cleavage and polyadenylation of pre-mRNAs. Also involved in chromosome segregation where it has a role in chromosome attachment to the mitotic spindle. The protein is Polyadenylation factor subunit 2 (PSF2) of Eremothecium gossypii (strain ATCC 10895 / CBS 109.51 / FGSC 9923 / NRRL Y-1056) (Yeast).